The following is a 106-amino-acid chain: Putative toxin Rv3098A/RVBD_3098A (106 aa).

It belongs to the PemK/MazF family. Forms a complex with cognate antitoxin Rv3098B/RVBD_3098B.

Functionally, putative toxic component of a possible type II toxin-antitoxin (TA) system. Its toxic effect may be neutralized by cognate antitoxin Rv3098B/RVBD_3098B. The sequence is that of Putative toxin Rv3098A/RVBD_3098A from Mycobacterium tuberculosis (strain ATCC 25618 / H37Rv).